Consider the following 709-residue polypeptide: Nicastrin (709 aa).

The N-terminal stretch at 1–33 is a signal peptide; that stretch reads MATAGGGSGADPGSRGLLRLLSFCVLLAGLCRG. At 34-669 the chain is on the extracellular side; sequence NSVERKIYIP…IFLIASKELE (636 aa). Residues N45 and N55 are each glycosylated (N-linked (GlcNAc...) asparagine). Disulfide bonds link C50-C62 and C140-C159. 3 N-linked (GlcNAc...) asparagine glycosylation sites follow: N187, N200, and N204. Disulfide bonds link C195/C213 and C230/C248. N-linked (GlcNAc...) asparagine glycans are attached at residues N264, N387, N417, N435, N464, N506, N530, N562, N573, N580, and N612. Residues C586 and C620 are joined by a disulfide bond. The chain crosses the membrane as a helical span at residues 670–690; it reads LITLTVGFGILIFSLIVTYCI. Residues 691 to 709 lie on the Cytoplasmic side of the membrane; that stretch reads NAKADVLFIAPREPGAVSY.

Belongs to the nicastrin family. Component of the gamma-secretase complex. The functional gamma-secretase complex is composed of at least four polypeptides: a presenilin homodimer (PSEN1 or PSEN2), nicastrin (NCSTN), APH1 (APH1A or APH1B) and PSENEN/PEN2. Binds to proteolytic processed C-terminal fragments C83 and C99 of the amyloid precursor protein (APP). Interacts with PSEN1 and PSEN2. N-glycosylated. Detected in brain (at protein level). Widely expressed.

Its subcellular location is the membrane. The protein localises to the cytoplasmic vesicle membrane. The protein resides in the melanosome. In terms of biological role, essential subunit of the gamma-secretase complex, an endoprotease complex that catalyzes the intramembrane cleavage of integral membrane proteins such as Notch receptors and APP (amyloid-beta precursor protein). The gamma-secretase complex plays a role in Notch and Wnt signaling cascades and regulation of downstream processes via its role in processing key regulatory proteins, and by regulating cytosolic CTNNB1 levels. The sequence is that of Nicastrin (NCSTN) from Homo sapiens (Human).